Here is a 1368-residue protein sequence, read N- to C-terminus: DNA-directed RNA polymerase subunit beta (1368 aa).

It belongs to the RNA polymerase beta chain family. In terms of assembly, the RNAP catalytic core consists of 2 alpha, 1 beta, 1 beta' and 1 omega subunit. When a sigma factor is associated with the core the holoenzyme is formed, which can initiate transcription.

The enzyme catalyses RNA(n) + a ribonucleoside 5'-triphosphate = RNA(n+1) + diphosphate. Functionally, DNA-dependent RNA polymerase catalyzes the transcription of DNA into RNA using the four ribonucleoside triphosphates as substrates. The chain is DNA-directed RNA polymerase subunit beta from Legionella pneumophila subsp. pneumophila (strain Philadelphia 1 / ATCC 33152 / DSM 7513).